We begin with the raw amino-acid sequence, 377 residues long: N-acetyldiaminopimelate deacetylase (377 aa).

Asp-69 is an active-site residue. Glu-128 (proton acceptor) is an active-site residue.

Belongs to the peptidase M20A family. N-acetyldiaminopimelate deacetylase subfamily.

It carries out the reaction N-acetyl-(2S,6S)-2,6-diaminopimelate + H2O = (2S,6S)-2,6-diaminopimelate + acetate. It participates in amino-acid biosynthesis; L-lysine biosynthesis via DAP pathway; LL-2,6-diaminopimelate from (S)-tetrahydrodipicolinate (acetylase route): step 3/3. Functionally, catalyzes the conversion of N-acetyl-diaminopimelate to diaminopimelate and acetate. The polypeptide is N-acetyldiaminopimelate deacetylase (Brevibacillus brevis (strain 47 / JCM 6285 / NBRC 100599)).